The following is a 99-amino-acid chain: MAVNPLDFLKNMSGFKDNIDNFKKEISQIVVCGRAGSDVVVVEMNGEFVVKKVVIKEEFFSDLDNEALEHMIKSAFNDAISKVKEEIKSKTMGSIPFGI.

The protein belongs to the YbaB/EbfC family. As to quaternary structure, homodimer.

Its subcellular location is the cytoplasm. It is found in the nucleoid. Binds to DNA and alters its conformation. May be involved in regulation of gene expression, nucleoid organization and DNA protection. The polypeptide is Nucleoid-associated protein EbfC (Borrelia turicatae (strain 91E135)).